The sequence spans 148 residues: Deoxyuridine 5'-triphosphate nucleotidohydrolase (148 aa).

Substrate-binding positions include 68 to 70 (RSG), Asn-81, 85 to 87 (TID), and Lys-95.

This sequence belongs to the dUTPase family. The cofactor is Mg(2+).

It carries out the reaction dUTP + H2O = dUMP + diphosphate + H(+). The protein operates within pyrimidine metabolism; dUMP biosynthesis; dUMP from dCTP (dUTP route): step 2/2. Functionally, this enzyme is involved in nucleotide metabolism: it produces dUMP, the immediate precursor of thymidine nucleotides and it decreases the intracellular concentration of dUTP so that uracil cannot be incorporated into DNA. The sequence is that of Deoxyuridine 5'-triphosphate nucleotidohydrolase from Rickettsia akari (strain Hartford).